The following is a 112-amino-acid chain: Ig kappa chain V-III region TEPC 124 (112 aa).

Positions 1–23 (DIVLTQSPASLAVSLGQRATISC) are framework-1. A disulfide bridge links Cys-23 with Cys-92. The complementarity-determining-1 stretch occupies residues 24-38 (RASZSVNWYGNSFMZ). The framework-2 stretch occupies residues 39-53 (WYZZKPGZPPKLLIY). Positions 54-60 (RASNLZS) are complementarity-determining-2. Residues 61 to 92 (GIPARFSGSGSRTBFTLTIBPVZABDVATYFC) form a framework-3 region. Residues 93-101 (ZZSBZAPWT) form a complementarity-determining-3 region. Positions 102–111 (FGSGTKLEIK) are framework-4.

The chain is Ig kappa chain V-III region TEPC 124 from Mus musculus (Mouse).